We begin with the raw amino-acid sequence, 87 residues long: MSLIELLFGRKQKTATVARDRLQIIIAQERAQEGQTPDYLPTLRKELMEVLSKYVNVSLDNIRISQEKQDGMDVLELNITLPEQKKV.

Belongs to the MinE family.

Functionally, prevents the cell division inhibition by proteins MinC and MinD at internal division sites while permitting inhibition at polar sites. This ensures cell division at the proper site by restricting the formation of a division septum at the midpoint of the long axis of the cell. In Neisseria gonorrhoeae (strain ATCC 700825 / FA 1090), this protein is Cell division topological specificity factor.